The chain runs to 545 residues: MLTQLKTYPKLLKHYEEIKEVHMRDWFFKDKERASRYFLQFESLSLDYSKNRLNDTTLKLLFELANDCSLKEKIEAMFKGEKINTTEKRAVLHTALRSLNDTEILLDNMEVLKSIRSVLKRMRAFSDSVRSGKRLGYTNQVITDIVNIGIGGSDLGALMVCTALKRYAHPRLKMHFVSNVDGTQILDVLEKLNPASTLFIVASKTFSTQETLTNALTARKWFVERSGDEKHIAKHFVAVSTNKEAVQQFGIDEHNMFEFWDFVGGRYSLWSAIGLSIMIYLGKKNFNALLKGAYLMDEHFRNAPFESNLPVLMGLIGVWYINFFQSKSHLIAPYDQYLRHFPKFIQQLDMESNGKRISKKGEIIPYDTCPVVWGDMGINAQHAFFQLLHQGTHLIPIDFIASLDKKPNAKGHHEILFSNVLAQAQAFMKGKSYEEALGELLFKGLDKDEAKDLAHHRVFFGNRPSNILLLEKISPSNIGALVALYEHKVFVQGVIWDINSFDQWGVELGKELAVPILQELEGHKSNAYFDSSTKHLIELYKNYNQ.

The active-site Proton donor is the glutamate 351. Catalysis depends on residues histidine 382 and lysine 510.

The protein belongs to the GPI family.

Its subcellular location is the cytoplasm. It catalyses the reaction alpha-D-glucose 6-phosphate = beta-D-fructose 6-phosphate. It functions in the pathway carbohydrate biosynthesis; gluconeogenesis. It participates in carbohydrate degradation; glycolysis; D-glyceraldehyde 3-phosphate and glycerone phosphate from D-glucose: step 2/4. Its function is as follows. Catalyzes the reversible isomerization of glucose-6-phosphate to fructose-6-phosphate. In Helicobacter pylori (strain ATCC 700392 / 26695) (Campylobacter pylori), this protein is Glucose-6-phosphate isomerase.